The following is a 375-amino-acid chain: 23S rRNA (uracil(747)-C(5))-methyltransferase RlmC (375 aa).

Residues cysteine 3, cysteine 11, cysteine 14, and cysteine 87 each coordinate [4Fe-4S] cluster. 4 residues coordinate S-adenosyl-L-methionine: glutamine 212, phenylalanine 241, glutamate 262, and asparagine 307. The Nucleophile role is filled by cysteine 334.

Belongs to the class I-like SAM-binding methyltransferase superfamily. RNA M5U methyltransferase family. RlmC subfamily.

The catalysed reaction is uridine(747) in 23S rRNA + S-adenosyl-L-methionine = 5-methyluridine(747) in 23S rRNA + S-adenosyl-L-homocysteine + H(+). Its function is as follows. Catalyzes the formation of 5-methyl-uridine at position 747 (m5U747) in 23S rRNA. The protein is 23S rRNA (uracil(747)-C(5))-methyltransferase RlmC of Shigella boydii serotype 18 (strain CDC 3083-94 / BS512).